The primary structure comprises 847 residues: Acyl-homoserine lactone acylase QuiP (847 aa).

The N-terminal stretch at 1–26 (MASPAFMRFLPRCGAAAAFGTLLGLA) is a signal peptide. S265 serves as the catalytic Nucleophile.

Belongs to the peptidase S45 family. Heterodimer of an alpha subunit and a beta subunit processed from the same precursor.

The protein resides in the periplasm. It catalyses the reaction an N-acyl-L-homoserine lactone + H2O = L-homoserine lactone + a carboxylate. Its function is as follows. Catalyzes the deacylation of acyl-homoserine lactone (AHL or acyl-HSL), releasing homoserine lactone (HSL) and the corresponding fatty acid. Possesses a specificity for the degradation of long-chain acyl-HSLs (side chains of seven or more carbons in length). Appears to be the acyl-HSL acylase that underlies the ability of P.aeruginosa to degrade and utilize certain acyl-HSLs as growth nutrients, including one of its own quorum signals, 3-oxo-C12-HSL. Is thought to have a role in quorum quenching. The sequence is that of Acyl-homoserine lactone acylase QuiP (quiP) from Pseudomonas aeruginosa (strain ATCC 15692 / DSM 22644 / CIP 104116 / JCM 14847 / LMG 12228 / 1C / PRS 101 / PAO1).